The following is a 223-amino-acid chain: ATP phosphoribosyltransferase (223 aa).

The protein belongs to the ATP phosphoribosyltransferase family. Short subfamily. As to quaternary structure, heteromultimer composed of HisG and HisZ subunits.

It localises to the cytoplasm. It carries out the reaction 1-(5-phospho-beta-D-ribosyl)-ATP + diphosphate = 5-phospho-alpha-D-ribose 1-diphosphate + ATP. Its pathway is amino-acid biosynthesis; L-histidine biosynthesis; L-histidine from 5-phospho-alpha-D-ribose 1-diphosphate: step 1/9. In terms of biological role, catalyzes the condensation of ATP and 5-phosphoribose 1-diphosphate to form N'-(5'-phosphoribosyl)-ATP (PR-ATP). Has a crucial role in the pathway because the rate of histidine biosynthesis seems to be controlled primarily by regulation of HisG enzymatic activity. The protein is ATP phosphoribosyltransferase of Bordetella pertussis (strain Tohama I / ATCC BAA-589 / NCTC 13251).